Consider the following 163-residue polypeptide: Cytochrome b6-f complex subunit 4 (163 aa).

Transmembrane regions (helical) follow at residues 36–56 (LLYI…GLAV), 95–115 (LLGV…PFLE), and 131–151 (TVFL…TLPI).

This sequence belongs to the cytochrome b family. PetD subfamily. The 4 large subunits of the cytochrome b6-f complex are cytochrome b6, subunit IV (17 kDa polypeptide, petD), cytochrome f and the Rieske protein, while the 4 small subunits are petG, petL, petM and petN. The complex functions as a dimer.

The protein resides in the plastid. The protein localises to the chloroplast thylakoid membrane. Component of the cytochrome b6-f complex, which mediates electron transfer between photosystem II (PSII) and photosystem I (PSI), cyclic electron flow around PSI, and state transitions. The polypeptide is Cytochrome b6-f complex subunit 4 (Drimys granadensis).